Reading from the N-terminus, the 197-residue chain is Imidazoleglycerol-phosphate dehydratase (197 aa).

The protein belongs to the imidazoleglycerol-phosphate dehydratase family.

Its subcellular location is the cytoplasm. It catalyses the reaction D-erythro-1-(imidazol-4-yl)glycerol 3-phosphate = 3-(imidazol-4-yl)-2-oxopropyl phosphate + H2O. Its pathway is amino-acid biosynthesis; L-histidine biosynthesis; L-histidine from 5-phospho-alpha-D-ribose 1-diphosphate: step 6/9. This Pseudomonas putida (strain ATCC 700007 / DSM 6899 / JCM 31910 / BCRC 17059 / LMG 24140 / F1) protein is Imidazoleglycerol-phosphate dehydratase.